We begin with the raw amino-acid sequence, 187 residues long: Intermembrane transport lipoprotein PqiC (187 aa).

The N-terminal stretch at 1–15 (MKKWLVTIAALWLAG) is a signal peptide. The N-palmitoyl cysteine moiety is linked to residue Cys16. Cys16 carries the S-diacylglycerol cysteine lipid modification.

As to quaternary structure, may form a complex composed of PqiA, PqiB and PqiC. Interacts with PqiB.

It is found in the cell outer membrane. Functionally, component of a transport pathway that contributes to membrane integrity. In Escherichia coli (strain K12), this protein is Intermembrane transport lipoprotein PqiC.